Consider the following 328-residue polypeptide: Delta(3,5)-Delta(2,4)-dienoyl-CoA isomerase, mitochondrial (328 aa).

The transit peptide at 1-33 (MAAGIVASRRLRDLLTRRLTGSNYPGLSISLRL) directs the protein to the mitochondrion. Substrate contacts are provided by residues 116–120 (AGIDL) and G174. K231 is modified (N6-succinyllysine). S268 is subject to Phosphoserine. Residues 326-328 (SKL) carry the Microbody targeting signal motif. K327 bears the N6-acetyllysine mark.

This sequence belongs to the enoyl-CoA hydratase/isomerase family. Homohexamer.

The protein resides in the mitochondrion. It is found in the peroxisome. It carries out the reaction (3E,5Z)-octadienoyl-CoA = (2E,4E)-octadienoyl-CoA. The enzyme catalyses (3E,5Z,8Z,11Z,14Z)-eicosapentaenoyl-CoA = (2E,4E,8Z,11Z,14Z)-eicosapentaenoyl-CoA. Its pathway is lipid metabolism; fatty acid beta-oxidation. Its function is as follows. Isomerization of 3-trans,5-cis-dienoyl-CoA to 2-trans,4-trans-dienoyl-CoA. This is Delta(3,5)-Delta(2,4)-dienoyl-CoA isomerase, mitochondrial from Homo sapiens (Human).